The primary structure comprises 79 residues: Alpha-actitoxin-Ms11a-4 (79 aa).

Positions 1-23 (MKVLVAVLVFALLMCMFVDIAES) are cleaved as a signal peptide. Residues 24-46 (RRRDNPEYPSGLRYDEEMGVFKR) constitute a propeptide that is removed on maturation. 3 cysteine pairs are disulfide-bonded: C47-C61, C54-C67, and C60-C76. At Y78 the chain carries Tyrosine amide.

It localises to the secreted. It is found in the nematocyst. In terms of biological role, alpha-toxins act on postsynaptic membranes, they bind to the nicotinic acetylcholine receptors (nAChR) and thus inhibit them. This toxin very weakly competes with alpha-bungarotoxin for binding to orthosteric sites on muscle-type T.carlifornicus (IC(50)=14.95 uM) and human alpha-7/CHRNA7 nAChRs (IC(50)&gt;45 uM). The sequence is that of Alpha-actitoxin-Ms11a-4 from Metridium senile (Brown sea anemone).